The chain runs to 334 residues: Glycerol-3-phosphate dehydrogenase [NAD(P)+] (334 aa).

4 residues coordinate NADPH: S11, W12, R32, and K106. Residues K106 and G136 each coordinate sn-glycerol 3-phosphate. A140 is a binding site for NADPH. Residues K191, D244, S254, R255, and N256 each coordinate sn-glycerol 3-phosphate. The active-site Proton acceptor is K191. R255 is a binding site for NADPH. V279 and E281 together coordinate NADPH.

Belongs to the NAD-dependent glycerol-3-phosphate dehydrogenase family.

The protein localises to the cytoplasm. The enzyme catalyses sn-glycerol 3-phosphate + NAD(+) = dihydroxyacetone phosphate + NADH + H(+). The catalysed reaction is sn-glycerol 3-phosphate + NADP(+) = dihydroxyacetone phosphate + NADPH + H(+). It functions in the pathway membrane lipid metabolism; glycerophospholipid metabolism. Functionally, catalyzes the reduction of the glycolytic intermediate dihydroxyacetone phosphate (DHAP) to sn-glycerol 3-phosphate (G3P), the key precursor for phospholipid synthesis. This is Glycerol-3-phosphate dehydrogenase [NAD(P)+] from Parafrankia sp. (strain EAN1pec).